The primary structure comprises 91 residues: Large ribosomal subunit protein eL34 (91 aa).

A disordered region spans residues 48–71 (RGRPVEMRKLPKTKKRPERPYPHL).

The protein belongs to the eukaryotic ribosomal protein eL34 family.

This Pyrococcus abyssi (strain GE5 / Orsay) protein is Large ribosomal subunit protein eL34 (rpl34e).